Here is a 347-residue protein sequence, read N- to C-terminus: NADH-ubiquinone oxidoreductase chain 2 (347 aa).

A run of 9 helical transmembrane segments spans residues 3–23 (PMTFSLIMMTMVSGTFLVMMS), 59–79 (YFLTQATASMLLMMAAIINLL), 89–109 (LINPMASVTMTMALAMKLGLA), 150–170 (NLNILMIMALLSIAIGGWGGL), 178–198 (IMAYSSIAHMGWMMSVLMYNP), 201–221 (MLLNLYLYIPMTITTFSLLMI), 237–257 (LPLITMIILITMLSLGGLPPL), 276–296 (IILSTVMALLALLNLYFYTRI), and 326–346 (LPLMIIISTLILPVSPMTAIL).

The protein belongs to the complex I subunit 2 family. In terms of assembly, core subunit of respiratory chain NADH dehydrogenase (Complex I) which is composed of 45 different subunits. Interacts with TMEM242.

The protein resides in the mitochondrion inner membrane. The catalysed reaction is a ubiquinone + NADH + 5 H(+)(in) = a ubiquinol + NAD(+) + 4 H(+)(out). Its function is as follows. Core subunit of the mitochondrial membrane respiratory chain NADH dehydrogenase (Complex I) which catalyzes electron transfer from NADH through the respiratory chain, using ubiquinone as an electron acceptor. Essential for the catalytic activity and assembly of complex I. The sequence is that of NADH-ubiquinone oxidoreductase chain 2 from Nyctophilus arnhemensis (Northern long-eared bat).